The chain runs to 92 residues: YcgL domain-containing protein Sfri_1738 (92 aa).

The 85-residue stretch at 1 to 85 (MICAVYKSGR…PQINLLEQHK (85 aa)) folds into the YcgL domain.

This is YcgL domain-containing protein Sfri_1738 from Shewanella frigidimarina (strain NCIMB 400).